The following is a 113-amino-acid chain: Large ribosomal subunit protein bL20c (113 aa).

This sequence belongs to the bacterial ribosomal protein bL20 family.

It localises to the plastid. The protein resides in the chloroplast. Binds directly to 23S ribosomal RNA and is necessary for the in vitro assembly process of the 50S ribosomal subunit. It is not involved in the protein synthesizing functions of that subunit. The chain is Large ribosomal subunit protein bL20c from Nephroselmis olivacea (Green alga).